Reading from the N-terminus, the 738-residue chain is Interleukin-12 receptor subunit beta-1 (738 aa).

A signal peptide spans 1–19 (MDMMGLAGTSKHITFLLLC). Over 20–565 (QLGASGPGDG…QRFSFEVQIS (546 aa)) the chain is Extracellular. 5 Fibronectin type-III domains span residues 47-152 (GPRN…TPPL), 152-258 (LGHI…PEVL), 259-359 (PQAK…LPAQ), 360-465 (ELTE…GNAS), and 469-565 (TPRH…VQIS). N-linked (GlcNAc...) asparagine glycosylation is present at Asn50. An intrachain disulfide couples Cys53 to Cys63. 6 N-linked (GlcNAc...) asparagine glycosylation sites follow: Asn73, Asn86, Asn130, Asn144, Asn169, and Asn188. A WSXWS motif motif is present at residues 244 to 248 (WSDWS). N-linked (GlcNAc...) asparagine glycans are attached at residues Asn330, Asn368, Asn374, Asn401, Asn463, and Asn477. Residues 566–591 (RLSIIFASLGSFASVLLVGSLGYIGL) form a helical membrane-spanning segment. Topologically, residues 592–738 (NRAAWHLCPP…PGPPTLGQEA (147 aa)) are cytoplasmic. A Box 1 motif motif is present at residues 598 to 606 (LCPPLPTPC).

It belongs to the type I cytokine receptor family. Type 2 subfamily. In terms of assembly, dimer or oligomer; disulfide-linked. Interacts with IL12RB2 to form the high affinity IL12 receptor. Heterodimer with IL23R; in presence of IL23. The heterodimer forms the IL23 receptor.

Its subcellular location is the membrane. Functions as an interleukin receptor which binds interleukin-12 with low affinity and is involved in IL12 transduction. Associated with IL12RB2 it forms a functional, high affinity receptor for IL12. Also associates with IL23R to form the interleukin-23 receptor which functions in IL23 signal transduction probably through activation of the Jak-Stat signaling cascade. The sequence is that of Interleukin-12 receptor subunit beta-1 (Il12rb1) from Mus musculus (Mouse).